The chain runs to 110 residues: Large ribosomal subunit protein uL22 (110 aa).

The protein belongs to the universal ribosomal protein uL22 family. In terms of assembly, part of the 50S ribosomal subunit.

This protein binds specifically to 23S rRNA; its binding is stimulated by other ribosomal proteins, e.g. L4, L17, and L20. It is important during the early stages of 50S assembly. It makes multiple contacts with different domains of the 23S rRNA in the assembled 50S subunit and ribosome. In terms of biological role, the globular domain of the protein is located near the polypeptide exit tunnel on the outside of the subunit, while an extended beta-hairpin is found that lines the wall of the exit tunnel in the center of the 70S ribosome. The chain is Large ribosomal subunit protein uL22 from Shewanella frigidimarina (strain NCIMB 400).